We begin with the raw amino-acid sequence, 540 residues long: Cytokinin dehydrogenase 5 (540 aa).

Positions 1-22 are cleaved as a signal peptide; it reads MNREMTSSFLLLTFAICKLIIA. The FAD-binding PCMH-type domain maps to 63–241; the sequence is SPEEPLAVLH…TRARISLEPA (179 aa). Residues Ala97, Gly99, and Gly101 each contribute to the FAD site. His102 is subject to Pros-8alpha-FAD histidine. Residues Ser103, Gln107, Asp165, Thr170, Ser176, Ile180, and Ile231 each coordinate FAD. Residues Asn310 and Asn406 are each glycosylated (N-linked (GlcNAc...) asparagine). FAD-binding residues include Tyr479 and Gln517.

It belongs to the oxygen-dependent FAD-linked oxidoreductase family. The cofactor is FAD. In terms of tissue distribution, expressed in the developing leaf petioles and in the rib zone of the axillary shoot meristems. In roots, expressed in the vascular cylinder within the root apical meristem and only faintly detectable in the differentiated root.

The protein resides in the secreted. The protein localises to the extracellular space. It carries out the reaction N(6)-dimethylallyladenine + A + H2O = 3-methyl-2-butenal + adenine + AH2. Its function is as follows. Catalyzes the oxidation of cytokinins, a family of N(6)-substituted adenine derivatives that are plant hormones, where the substituent is an isopentenyl group. In association with CKX3 regulates the activity of the reproductive meristems, flower organ size and ovule formation. The polypeptide is Cytokinin dehydrogenase 5 (CKX5) (Arabidopsis thaliana (Mouse-ear cress)).